Reading from the N-terminus, the 438-residue chain is uncharacterized protein (438 aa).

Positions 1-32 are cleaved as a signal peptide; the sequence is MARPLLGKTSSVRRRLESLSACSIFFFLRKFC.

This is an uncharacterized protein from Frog virus 3 (isolate Goorha) (FV-3).